Here is a 348-residue protein sequence, read N- to C-terminus: NADH-quinone oxidoreductase subunit H (348 aa).

9 consecutive transmembrane segments (helical) span residues leucine 13 to leucine 33, proline 50 to leucine 70, alanine 82 to isoleucine 102, valine 115 to glycine 135, isoleucine 161 to valine 181, phenylalanine 198 to leucine 218, alanine 258 to valine 278, tryptophan 285 to leucine 305, and leucine 321 to leucine 341.

It belongs to the complex I subunit 1 family. In terms of assembly, NDH-1 is composed of 14 different subunits. Subunits NuoA, H, J, K, L, M, N constitute the membrane sector of the complex.

It localises to the cell inner membrane. It catalyses the reaction a quinone + NADH + 5 H(+)(in) = a quinol + NAD(+) + 4 H(+)(out). NDH-1 shuttles electrons from NADH, via FMN and iron-sulfur (Fe-S) centers, to quinones in the respiratory chain. The immediate electron acceptor for the enzyme in this species is believed to be ubiquinone. Couples the redox reaction to proton translocation (for every two electrons transferred, four hydrogen ions are translocated across the cytoplasmic membrane), and thus conserves the redox energy in a proton gradient. This subunit may bind ubiquinone. The polypeptide is NADH-quinone oxidoreductase subunit H (Agrobacterium fabrum (strain C58 / ATCC 33970) (Agrobacterium tumefaciens (strain C58))).